We begin with the raw amino-acid sequence, 509 residues long: MEKYNSLSDFLKEFYIPTYVLSAETEEEEEEESRPTPASPVLVFINSKSGGQLGGELILTYRSLLNHNQVFDLDQETPDKVLRRIYLNLERLKDDDFARQIREKLKIIVAGGDGTAGWLLGVVCDLKLSHPPPIATVPLGTGNNLPFAFGWGKKNPGTDRTAVESFLEQVLKAKVMKIDNWHILMRMKTPKEGGSCDPVAPLELPHSLHAFHRVSPTDELNKEGCHTFRGGFWNYFSLGMDAQISYAFHSERKLHPEKFKNQLVNQSTYVKLGCTQGWFCASLFHPASRNIAQLAKVKIATRNGQWQDLHIPHSIRSIVCLNLPSFSGGLNPWGTPNPRKQRDRGLTPPFVDDGLIEVVGFRNAWHGLVLLAPNGHGTRLAQANRIRFEFHKGATDHTFMRMDGEPWKQPLPLDDETVMVEISHLGQVNMLATHDCRSRSVFDPSTPRHQDGAEDYDDNEDDSVAEGEEFRKFGAADTFKIPDEGEHSNKKGRASRRRNSNVHGWSHVL.

One can recognise a DAGKc domain in the interval 36–187 (TPASPVLVFI…IDNWHILMRM (152 aa)). Over residues 439 to 452 (RSVFDPSTPRHQDG) the composition is skewed to basic and acidic residues. The tract at residues 439–509 (RSVFDPSTPR…SNVHGWSHVL (71 aa)) is disordered. The segment covering 453 to 467 (AEDYDDNEDDSVAEG) has biased composition (acidic residues). Positions 468-489 (EEFRKFGAADTFKIPDEGEHSN) are enriched in basic and acidic residues. The segment covering 490-500 (KKGRASRRRNS) has biased composition (basic residues).

It belongs to the eukaryotic diacylglycerol kinase family. Monomer.

It catalyses the reaction a 1,2-diacyl-sn-glycerol + ATP = a 1,2-diacyl-sn-glycero-3-phosphate + ADP + H(+). In terms of biological role, phosphorylates the second messenger diacylglycerol (DAG) to generate phosphatidic acid (PA), another important signaling molecule. PA is required for plant development and responses to abiotic stress and pathogen attack. May be involved in the accumulation of PA during cold stress. The sequence is that of Diacylglycerol kinase 5 (DGK5) from Arabidopsis thaliana (Mouse-ear cress).